Consider the following 494-residue polypeptide: Beta-glucosidase 29 (494 aa).

Residues 1 to 28 (MAWLGIGMGRQIVPVLVFVAVLCSGVDA) form the signal peptide. An a beta-D-glucoside-binding site is contributed by Gln49. N-linked (GlcNAc...) asparagine glycosylation occurs at Asn103. A beta-D-glucoside-binding positions include His138 and 183 to 184 (NE). Glu184 functions as the Proton donor in the catalytic mechanism. The cysteines at positions 203 and 211 are disulfide-linked. N-linked (GlcNAc...) asparagine glycosylation occurs at Asn263. Tyr327 contacts a beta-D-glucoside. An N-linked (GlcNAc...) asparagine glycan is attached at Asn352. Residue Glu398 coordinates a beta-D-glucoside. Catalysis depends on Glu398, which acts as the Nucleophile. Asn406 carries N-linked (GlcNAc...) asparagine glycosylation. A beta-D-glucoside is bound by residues Trp447, 454 to 455 (EW), and Phe463.

The protein belongs to the glycosyl hydrolase 1 family.

It carries out the reaction Hydrolysis of terminal, non-reducing beta-D-glucosyl residues with release of beta-D-glucose.. The protein is Beta-glucosidase 29 (BGLU29) of Oryza sativa subsp. japonica (Rice).